A 299-amino-acid polypeptide reads, in one-letter code: tRNA uridine(34) hydroxylase (299 aa).

Positions 132–226 constitute a Rhodanese domain; the sequence is AGRPVVMLDT…YFEEVGGAHY (95 aa). The active-site Cysteine persulfide intermediate is C186.

This sequence belongs to the TrhO family.

It catalyses the reaction uridine(34) in tRNA + AH2 + O2 = 5-hydroxyuridine(34) in tRNA + A + H2O. In terms of biological role, catalyzes oxygen-dependent 5-hydroxyuridine (ho5U) modification at position 34 in tRNAs. This Burkholderia pseudomallei (strain 1106a) protein is tRNA uridine(34) hydroxylase.